The following is a 102-amino-acid chain: NADH-quinone oxidoreductase subunit K 1 (102 aa).

The next 3 membrane-spanning stretches (helical) occupy residues 5-25, 30-50, and 62-82; these read LYEVLILASILFAMGLACVVA, VIMMLIGIEIMLNAVMLTFVG, and VFSLMIMALTSAEVSLALAMV.

It belongs to the complex I subunit 4L family. NDH-1 is composed of 14 different subunits. Subunits NuoA, H, J, K, L, M, N constitute the membrane sector of the complex.

Its subcellular location is the cell inner membrane. It catalyses the reaction a quinone + NADH + 5 H(+)(in) = a quinol + NAD(+) + 4 H(+)(out). Its function is as follows. NDH-1 shuttles electrons from NADH, via FMN and iron-sulfur (Fe-S) centers, to quinones in the respiratory chain. The immediate electron acceptor for the enzyme in this species is believed to be ubiquinone. Couples the redox reaction to proton translocation (for every two electrons transferred, four hydrogen ions are translocated across the cytoplasmic membrane), and thus conserves the redox energy in a proton gradient. The chain is NADH-quinone oxidoreductase subunit K 1 from Citrifermentans bemidjiense (strain ATCC BAA-1014 / DSM 16622 / JCM 12645 / Bem) (Geobacter bemidjiensis).